A 139-amino-acid polypeptide reads, in one-letter code: Transcription antitermination protein NusB (139 aa).

The protein belongs to the NusB family.

Involved in transcription antitermination. Required for transcription of ribosomal RNA (rRNA) genes. Binds specifically to the boxA antiterminator sequence of the ribosomal RNA (rrn) operons. The chain is Transcription antitermination protein NusB from Escherichia fergusonii (strain ATCC 35469 / DSM 13698 / CCUG 18766 / IAM 14443 / JCM 21226 / LMG 7866 / NBRC 102419 / NCTC 12128 / CDC 0568-73).